An 86-amino-acid chain; its full sequence is Small ribosomal subunit protein eS27y (86 aa).

A C4-type zinc finger spans residues 39–61 (CQGCFNITTVFSHSQTVVVCGNC).

The protein belongs to the eukaryotic ribosomal protein eS27 family. It depends on Zn(2+) as a cofactor.

Functionally, may be involved in the elimination of damaged mRNA after UV irradiation. This Arabidopsis thaliana (Mouse-ear cress) protein is Small ribosomal subunit protein eS27y (RPS27B).